We begin with the raw amino-acid sequence, 149 residues long: Large ribosomal subunit protein uL15 (149 aa).

2 stretches are compositionally biased toward basic residues: residues 1–14 (MPTH…HRGH) and 21–30 (RVGKHRKHPG). The disordered stretch occupies residues 1 to 42 (MPTHLSKTRKHRGHVSAGHGRVGKHRKHPGGRGLAGGQHHHR).

It belongs to the universal ribosomal protein uL15 family.

This chain is Large ribosomal subunit protein uL15, found in Blumeria hordei (Barley powdery mildew).